Here is a 712-residue protein sequence, read N- to C-terminus: Solute carrier organic anion transporter family member 1C1 (712 aa).

Over Met1 to Lys43 the chain is Cytoplasmic. The helical transmembrane segment at Val44 to Leu63 threads the bilayer. Over Lys64–Gly82 the chain is Extracellular. The helical transmembrane segment at Val83–Gly103 threads the bilayer. Over Ala104–Pro109 the chain is Cytoplasmic. Residues Lys110–Glu134 traverse the membrane as a helical segment. Topologically, residues Gln135 to Ser184 are extracellular. Asn146 carries an N-linked (GlcNAc...) asparagine glycan. Residues Ser185–Asp213 form a helical membrane-spanning segment. Over Asp214–Ala232 the chain is Cytoplasmic. Residues Ile233–Ile253 traverse the membrane as a helical segment. Residues Gly254–Val271 are Extracellular-facing. Residues Gly272–Pro296 form a helical membrane-spanning segment. Over Lys297–Asn348 the chain is Cytoplasmic. Residues Leu349–Phe370 form a helical membrane-spanning segment. Residues Gly371–Arg390 are Extracellular-facing. A helical membrane pass occupies residues Ala391–Met414. The Cytoplasmic portion of the chain corresponds to Lys415 to Arg418. Residues Ile419 to Leu442 traverse the membrane as a helical segment. Residues Phe443 to Phe554 lie on the Extracellular side of the membrane. The region spanning Arg470–Gly525 is the Kazal-like domain. Disulfide bonds link Cys476-Cys506, Cys482-Cys502, and Cys491-Cys523. Asn510, Asn520, and Asn533 each carry an N-linked (GlcNAc...) asparagine glycan. A helical transmembrane segment spans residues Leu555–Leu577. The Cytoplasmic portion of the chain corresponds to Arg578 to Ser586. A helical transmembrane segment spans residues Phe587–Ile612. At Asp613–Thr646 the chain is on the extracellular side. Residues Val647 to Leu664 form a helical membrane-spanning segment. At Lys665 to Leu712 the chain is on the cytoplasmic side.

Belongs to the organo anion transporter (TC 2.A.60) family. In terms of tissue distribution, highly expressed in brain and in Leydig cells in testis. Localized in nests of Leydig cells (at protein level). Expressed in choroid plexus (at protein level). Not strongly enriched in cerebral microvessels.

The protein localises to the cell membrane. It carries out the reaction 3,3',5'-triiodo-L-thyronine(out) = 3,3',5'-triiodo-L-thyronine(in). The enzyme catalyses L-thyroxine(out) = L-thyroxine(in). The catalysed reaction is L-thyroxine sulfate(out) = L-thyroxine sulfate(in). Its function is as follows. Mediates the Na(+)-independent high affinity transport of organic anions such as the thyroid hormones L-thyroxine (T4), L-thyroxine sulfate (T4S), and 3,3',5'-triiodo-L-thyronine (reverse T3, rT3) at the plasma membrane. Regulates T4 levels in different brain regions by transporting T4, and also by serving as an export pump for T4S, which is a source of T4 after hydrolysis by local sulfatases. Increases the access of these substrates to the intracellular sites where they are metabolized by the deiodinases. Other potential substrates, such as triiodothyronine (T3), 17-beta-glucuronosyl estradiol (17beta-estradiol 17-O-(beta-D-glucuronate)), estrone-3-sulfate (E1S) and sulfobromophthalein (BSP) are transported with much lower efficiency. Transports T4 and E1S in a pH-insensitive manner. Facilitates the transport of thyroid hormones across the blood-brain barrier and into glia and neuronal cells in the brain. This chain is Solute carrier organic anion transporter family member 1C1 (SLCO1C1), found in Homo sapiens (Human).